We begin with the raw amino-acid sequence, 128 residues long: Large ribosomal subunit protein bL12 (128 aa).

It belongs to the bacterial ribosomal protein bL12 family. In terms of assembly, homodimer. Part of the ribosomal stalk of the 50S ribosomal subunit. Forms a multimeric L10(L12)X complex, where L10 forms an elongated spine to which 2 to 4 L12 dimers bind in a sequential fashion. Binds GTP-bound translation factors.

Its function is as follows. Forms part of the ribosomal stalk which helps the ribosome interact with GTP-bound translation factors. Is thus essential for accurate translation. This is Large ribosomal subunit protein bL12 from Corynebacterium kroppenstedtii (strain DSM 44385 / JCM 11950 / CIP 105744 / CCUG 35717).